We begin with the raw amino-acid sequence, 190 residues long: dTTP/UTP pyrophosphatase (190 aa).

Asp68 (proton acceptor) is an active-site residue.

Belongs to the Maf family. YhdE subfamily. A divalent metal cation serves as cofactor.

The protein resides in the cytoplasm. It carries out the reaction dTTP + H2O = dTMP + diphosphate + H(+). The enzyme catalyses UTP + H2O = UMP + diphosphate + H(+). Nucleoside triphosphate pyrophosphatase that hydrolyzes dTTP and UTP. May have a dual role in cell division arrest and in preventing the incorporation of modified nucleotides into cellular nucleic acids. This chain is dTTP/UTP pyrophosphatase, found in Acholeplasma laidlawii (strain PG-8A).